A 104-amino-acid chain; its full sequence is Large ribosomal subunit protein uL24 (104 aa).

A disordered region spans residues 41 to 61; that stretch reads ISKKHKKPTPNEKQSGGIFEK.

Belongs to the universal ribosomal protein uL24 family. Part of the 50S ribosomal subunit.

One of two assembly initiator proteins, it binds directly to the 5'-end of the 23S rRNA, where it nucleates assembly of the 50S subunit. Its function is as follows. One of the proteins that surrounds the polypeptide exit tunnel on the outside of the subunit. This chain is Large ribosomal subunit protein uL24, found in Wigglesworthia glossinidia brevipalpis.